A 184-amino-acid polypeptide reads, in one-letter code: Large ribosomal subunit protein uL15 (184 aa).

Positions 1 to 45 (MNLSSLRPAKGSVRNKKRVGRGQGSGNGTTAGKGNKGQQARSGYK) are disordered. Over residues 21-35 (RGQGSGNGTTAGKGN) the composition is skewed to gly residues.

Belongs to the universal ribosomal protein uL15 family. In terms of assembly, part of the 50S ribosomal subunit.

Functionally, binds to the 23S rRNA. The protein is Large ribosomal subunit protein uL15 of Chlorobium chlorochromatii (strain CaD3).